We begin with the raw amino-acid sequence, 220 residues long: Redox-sensing transcriptional repressor Rex (220 aa).

The segment at residues 25 to 64 is a DNA-binding region (H-T-H motif); that stretch reads WYLSNVKLLKQKGERYVSSTQISKEINIDASQIAKDLSYV. An NAD(+)-binding site is contributed by 99-104; the sequence is GVGSLG.

It belongs to the transcriptional regulatory Rex family. In terms of assembly, homodimer.

It is found in the cytoplasm. In terms of biological role, modulates transcription in response to changes in cellular NADH/NAD(+) redox state. The protein is Redox-sensing transcriptional repressor Rex of Bacteroides fragilis (strain ATCC 25285 / DSM 2151 / CCUG 4856 / JCM 11019 / LMG 10263 / NCTC 9343 / Onslow / VPI 2553 / EN-2).